The following is a 593-amino-acid chain: Bifunctional lycopene cyclase/phytoene synthase (593 aa).

Residues 1 to 242 (MAYDYALVHL…IVFGMAVFDQ (242 aa)) are lycopene beta-cyclase. 7 helical membrane-spanning segments follow: residues 8-28 (VHLKYTIPLAALLTVIAYPIF), 31-51 (IHFLQIGSLIVVSFLATLPWD), 77-97 (IEELFFFVIQTYITSLFYILL), 117-136 (IARGKVIGQGILVALTLYGV), 147-167 (YLGLILAWAFPFALLTFTVAG), 169-189 (FILTLPLTSTVVPIIIPTVYL), and 231-251 (ILIVFGMAVFDQYLAIIFAFP). The phytoene synthase stretch occupies residues 249-593 (AFPHLFPKVP…KTVLKALFSA (345 aa)).

It in the N-terminal section; belongs to the lycopene beta-cyclase family. This sequence in the C-terminal section; belongs to the phytoene/squalene synthase family.

It is found in the membrane. The catalysed reaction is all-trans-lycopene = gamma-carotene. It carries out the reaction gamma-carotene = all-trans-beta-carotene. It catalyses the reaction 2 (2E,6E,10E)-geranylgeranyl diphosphate = 15-cis-phytoene + 2 diphosphate. Its pathway is carotenoid biosynthesis; beta-carotene biosynthesis. It functions in the pathway carotenoid biosynthesis; phytoene biosynthesis; all-trans-phytoene from geranylgeranyl diphosphate: step 1/1. Its function is as follows. Bifunctional enzyme that catalyzes the reactions from geranylgeranyl diphosphate to phytoene (phytoene synthase) and lycopene to beta-carotene via the intermediate gamma-carotene (lycopene cyclase). The protein is Bifunctional lycopene cyclase/phytoene synthase of Podospora anserina (strain S / ATCC MYA-4624 / DSM 980 / FGSC 10383) (Pleurage anserina).